Here is a 77-residue protein sequence, read N- to C-terminus: MKLTCMMIVAVLFLTANTFVTADDSGNGMENLFPKAGHEMENLEASNRGKPCHEEGQLCDPFLQNCCLGWNCVFVCI.

The first 22 residues, 1–22, serve as a signal peptide directing secretion; it reads MKLTCMMIVAVLFLTANTFVTA. A propeptide spanning residues 23–47 is cleaved from the precursor; the sequence is DDSGNGMENLFPKAGHEMENLEASN. Intrachain disulfides connect Cys-52/Cys-66, Cys-59/Cys-72, and Cys-67/Cys-76.

As to expression, expressed by the venom duct.

The protein localises to the secreted. The chain is Conotoxin Vc6b from Conus victoriae (Queen Victoria cone).